The chain runs to 102 residues: Large ribosomal subunit protein bL21 (102 aa).

The protein belongs to the bacterial ribosomal protein bL21 family. As to quaternary structure, part of the 50S ribosomal subunit. Contacts protein L20.

Its function is as follows. This protein binds to 23S rRNA in the presence of protein L20. The chain is Large ribosomal subunit protein bL21 from Geotalea uraniireducens (strain Rf4) (Geobacter uraniireducens).